We begin with the raw amino-acid sequence, 595 residues long: Isoprene synthase, chloroplastic (595 aa).

A chloroplast-targeting transit peptide spans 1–37; that stretch reads MATELLCLHRPISLTHKLFRNPLPKVIQATPLTLKLR. A dimethylallyl diphosphate-binding site is contributed by Asp-345. Mg(2+) is bound by residues Asp-345 and Asp-349. The DDXXD motif motif lies at 345–349; the sequence is DDIYD. Dimethylallyl diphosphate is bound by residues Glu-423, Arg-486, and Asn-489. The Mg(2+) site is built by Asn-489, Ser-493, and Glu-497.

Belongs to the terpene synthase family. Tpsb subfamily. Requires Mg(2+) as cofactor. Mn(2+) serves as cofactor.

Its subcellular location is the plastid. The protein localises to the chloroplast. The catalysed reaction is dimethylallyl diphosphate = isoprene + diphosphate. Functionally, lyase that catalyzes the formation of isoprene from dimethylallyl diphosphate. In Populus tremuloides (Quaking aspen), this protein is Isoprene synthase, chloroplastic (ISPS).